The sequence spans 237 residues: 1-(5-phosphoribosyl)-5-[(5-phosphoribosylamino)methylideneamino] imidazole-4-carboxamide isomerase (237 aa).

Asp8 serves as the catalytic Proton acceptor. Asp129 serves as the catalytic Proton donor.

Belongs to the HisA/HisF family.

The protein localises to the cytoplasm. The enzyme catalyses 1-(5-phospho-beta-D-ribosyl)-5-[(5-phospho-beta-D-ribosylamino)methylideneamino]imidazole-4-carboxamide = 5-[(5-phospho-1-deoxy-D-ribulos-1-ylimino)methylamino]-1-(5-phospho-beta-D-ribosyl)imidazole-4-carboxamide. It participates in amino-acid biosynthesis; L-histidine biosynthesis; L-histidine from 5-phospho-alpha-D-ribose 1-diphosphate: step 4/9. In Dehalococcoides mccartyi (strain ATCC BAA-2266 / KCTC 15142 / 195) (Dehalococcoides ethenogenes (strain 195)), this protein is 1-(5-phosphoribosyl)-5-[(5-phosphoribosylamino)methylideneamino] imidazole-4-carboxamide isomerase.